Reading from the N-terminus, the 1452-residue chain is Pleiotropic drug resistance protein 1 (1452 aa).

The ABC transporter 1 domain occupies 152–425 (LNYLHILPNR…FEYMGFICPE (274 aa)). Residue 185 to 192 (GPPSSGKT) participates in ATP binding. The ABC transmembrane type-2 1 domain occupies 504-716 (LLKACTAREY…AQNAIAVNEF (213 aa)). 7 helical membrane passes run 521–541 (FVYI…MTLF), 554–574 (GAVF…NGFS), 609–629 (IPIT…VIGF), 640–660 (LLLL…MGAL), 664–684 (IIVA…MGGF), 694–714 (WWIW…IAVN), and 753–773 (IGAG…AVAL). Positions 808–830 (LGKSSSEKGNDVRRSASSRSMSS) are disordered. Positions 812–821 (SSEKGNDVRR) are enriched in basic and acidic residues. Positions 855-1107 (ITFDDIRYAV…HLIKYFEGID (253 aa)) constitute an ABC transporter 2 domain. 900–907 (GVSGAGKT) contributes to the ATP binding site. One can recognise an ABC transmembrane type-2 2 domain in the interval 1180–1394 (TQCMACFWKQ…TLYGLIASQF (215 aa)). A run of 7 helical transmembrane segments spans residues 1199-1219 (YTAV…TIFW), 1239-1259 (YIAV…VIAI), 1287-1307 (LPYL…MIGF), 1314-1334 (FFWY…YGMM), 1344-1364 (IAAI…GFIV), 1375-1395 (WYYY…SQFG), and 1421-1441 (FVGY…FIFA).

This sequence belongs to the ABC transporter superfamily. ABCG family. PDR (TC 3.A.1.205) subfamily. As to expression, expressed in root hypodermal passage cells. Expressed in stem tissues, particularly the vasculature and nodes adjacent to leaf axils.

It is found in the cell membrane. Its function is as follows. Cellular strigolactone (SL) transporter required for the exudation of SL from the root to the soil. The presence of SL in the vicinity of the roots is required for development of symbiotic interactions with arbuscular mycorrhizal fungi (AMF). Transports SL in the above ground tissues and is required for the control of shoot branching. SL regulates plant shoot architecture by inhibiting the outgrowth of axillary buds. Involved in the regulation of shootward and outward directional strigolactone transport in roots. Due to its polar localization in root cells, mediates directional shootward strigolactone transport, as well as localized outward directional transport for exudation to the soil. The sequence is that of Pleiotropic drug resistance protein 1 from Petunia axillaris (Large white petunia).